A 221-amino-acid chain; its full sequence is GTP-binding nuclear protein Ran-1 (221 aa).

A Small GTPase Ran-type domain is found at 10–174 (DYPSFKLVIV…LYLARKLAGD (165 aa)). 21–28 (DGGTGKTT) is a GTP binding site. Residues 40–48 (KKYEPTIGV) form a switch-I region. GTP contacts are provided by residues glycine 71, 125–128 (NKVD), and 153–155 (SAK). Positions 71 to 87 (GQEKFGGLRDGYYIHGQ) are switch-II.

This sequence belongs to the small GTPase superfamily. Ran family. As to quaternary structure, found in a nuclear export complex with RanGTP, exportin and pre-miRNA. Interacts with RANBP1A and RANBP1B. Interacts with TRN1. Interacts with ATX1. Interacts with KPNB1. Binds to XPO1. Interacts with MOS14. Binds to NTF2B.

The protein resides in the nucleus. Functionally, GTP-binding protein involved in nucleocytoplasmic transport. Required for the import of protein into the nucleus and also for RNA export. Involved in chromatin condensation and control of cell cycle. This chain is GTP-binding nuclear protein Ran-1 (RAN1), found in Arabidopsis thaliana (Mouse-ear cress).